A 167-amino-acid chain; its full sequence is Endoribonuclease YbeY (167 aa).

Positions 126, 130, and 136 each coordinate Zn(2+).

The protein belongs to the endoribonuclease YbeY family. The cofactor is Zn(2+).

It is found in the cytoplasm. Its function is as follows. Single strand-specific metallo-endoribonuclease involved in late-stage 70S ribosome quality control and in maturation of the 3' terminus of the 16S rRNA. The protein is Endoribonuclease YbeY of Novosphingobium aromaticivorans (strain ATCC 700278 / DSM 12444 / CCUG 56034 / CIP 105152 / NBRC 16084 / F199).